The chain runs to 677 residues: UvrABC system protein B (677 aa).

The region spanning 25 to 412 (DGVNSGREYQ…SGAIIEQVIR (388 aa)) is the Helicase ATP-binding domain. 38–45 (GATGTGKT) is an ATP binding site. A Beta-hairpin motif is present at residues 91–114 (YYDYYQPEAYVPVSDTYIAKTSSI). A Helicase C-terminal domain is found at 429–591 (QVEDLLDEIR…IVPMPAGKKA (163 aa)). The 36-residue stretch at 639-674 (PQLIDELETKMKKSAKDLDFENAAKLRDKIHQLRKK) folds into the UVR domain.

It belongs to the UvrB family. As to quaternary structure, forms a heterotetramer with UvrA during the search for lesions. Interacts with UvrC in an incision complex.

It is found in the cytoplasm. Its function is as follows. The UvrABC repair system catalyzes the recognition and processing of DNA lesions. A damage recognition complex composed of 2 UvrA and 2 UvrB subunits scans DNA for abnormalities. Upon binding of the UvrA(2)B(2) complex to a putative damaged site, the DNA wraps around one UvrB monomer. DNA wrap is dependent on ATP binding by UvrB and probably causes local melting of the DNA helix, facilitating insertion of UvrB beta-hairpin between the DNA strands. Then UvrB probes one DNA strand for the presence of a lesion. If a lesion is found the UvrA subunits dissociate and the UvrB-DNA preincision complex is formed. This complex is subsequently bound by UvrC and the second UvrB is released. If no lesion is found, the DNA wraps around the other UvrB subunit that will check the other stand for damage. In Prochlorococcus marinus (strain SARG / CCMP1375 / SS120), this protein is UvrABC system protein B.